The chain runs to 429 residues: tRNA(Ile2) 2-agmatinylcytidine synthetase TiaS (429 aa).

A DNA-binding region (OB) is located at residues 271-343 (VRGKVIKKYW…LTLNLEKFYP (73 aa)).

It belongs to the TiaS family.

It localises to the cytoplasm. It catalyses the reaction cytidine(34) in tRNA(Ile2) + agmatine + ATP + H2O = 2-agmatinylcytidine(34) in tRNA(Ile2) + AMP + 2 phosphate + 2 H(+). ATP-dependent agmatine transferase that catalyzes the formation of 2-agmatinylcytidine (agm2C) at the wobble position (C34) of tRNA(Ile2), converting the codon specificity from AUG to AUA. In Thermococcus sibiricus (strain DSM 12597 / MM 739), this protein is tRNA(Ile2) 2-agmatinylcytidine synthetase TiaS.